Here is a 352-residue protein sequence, read N- to C-terminus: S-adenosylmethionine:tRNA ribosyltransferase-isomerase (352 aa).

The protein belongs to the QueA family. In terms of assembly, monomer.

It is found in the cytoplasm. The enzyme catalyses 7-aminomethyl-7-carbaguanosine(34) in tRNA + S-adenosyl-L-methionine = epoxyqueuosine(34) in tRNA + adenine + L-methionine + 2 H(+). It functions in the pathway tRNA modification; tRNA-queuosine biosynthesis. Functionally, transfers and isomerizes the ribose moiety from AdoMet to the 7-aminomethyl group of 7-deazaguanine (preQ1-tRNA) to give epoxyqueuosine (oQ-tRNA). The sequence is that of S-adenosylmethionine:tRNA ribosyltransferase-isomerase from Paraburkholderia phytofirmans (strain DSM 17436 / LMG 22146 / PsJN) (Burkholderia phytofirmans).